The primary structure comprises 726 residues: Transmembrane channel-like protein 8 (726 aa).

Residues 1–114 (MLLPRSVSSE…GIRSYFTFLR (114 aa)) lie on the Cytoplasmic side of the membrane. At serine 6 the chain carries Phosphoserine. A helical membrane pass occupies residues 115–135 (FLLLLNLLSLLLTASFVLLPL). Residues 136–200 (VWLRPPDPGP…VGPESSSVYS (65 aa)) are Lumenal-facing. N-linked (GlcNAc...) asparagine glycosylation occurs at asparagine 148. A helical membrane pass occupies residues 201 to 221 (IRLAYLLSPLACLLLCFCGTL). Residues 222 to 299 (RRMVKGLPQK…AQTACRLLSY (78 aa)) are Cytoplasmic-facing. A helical membrane pass occupies residues 300 to 320 (LRVNVLNGLLVVGAISAIFWA). Topologically, residues 321–338 (TKYSQDNKEESLFLLLQY) are lumenal. Residues 339 to 359 (LPPGVIALVNFLGPLLFTFLV) traverse the membrane as a helical segment. At 360-426 (QLENYPPNTE…QCWENSVGEE (67 aa)) the chain is on the cytoplasmic side. Residues 362–530 (ENYPPNTEVN…SSRPFRASSS (169 aa)) are TMC domain. The chain crosses the membrane as a helical span at residues 427–447 (LYKLSIFNFLLTVAFAFLVTL). Residues 448-488 (PRRLLVDRFSGRFWAWLEREEFLVPKNVLDIVAGQTVTWMG) are Lumenal-facing. Residues 489 to 509 (LFYCPLLPLLNSVFLFLTFYI) form a helical membrane-spanning segment. The Cytoplasmic segment spans residues 510–531 (KKYTLLKNSRASSRPFRASSST). Residues 532–552 (FFFQLVLLLGLLLAAVPLGYV) traverse the membrane as a helical segment. The Lumenal segment spans residues 553 to 594 (VSSIHSSWDCGLFTNYSAPWQVVPELVALGLPPIGQRALHYL). Asparagine 567 is a glycosylation site (N-linked (GlcNAc...) asparagine). The chain crosses the membrane as a helical span at residues 595–615 (GSHAFSFPLLIMLSLVLTVCV). The Cytoplasmic segment spans residues 616–726 (SQTQANARAI…RFRFPSGAEL (111 aa)). A disordered region spans residues 651–726 (PEPGPSDSPG…RFRFPSGAEL (76 aa)). The segment covering 652–662 (EPGPSDSPGPK) has biased composition (pro residues). 2 positions are modified to phosphoserine: serine 658 and serine 673.

It belongs to the TMC family. In terms of assembly, interacts with TMC6. Interacts and forms a complex with TMC6 and CIB1; the interaction stabilizes each component of the complex. Interacts and forms a complex with TMC6 and SLC30A1/ZNT1; the interaction regulates zinc transport into the ER. Interacts with TRADD; the interaction competes with TRADD/RIPK1/TRAF2/cIAPs complex I formation and facilites complex II formation. (Microbial infection) Interacts with human papillomavirus 16/HPV16 protein E5; the interaction alleviates TMC8-mediated transcription factors inhibition. In terms of tissue distribution, expressed in placenta, prostate and testis.

The protein resides in the endoplasmic reticulum membrane. Its subcellular location is the golgi apparatus membrane. It localises to the nucleus membrane. Acts as a regulatory protein involved in the regulation of numerous cellular processes. Together with its homolog TMC6/EVER1, forms a complex with calcium-binding protein CIB1 in lymphocytes and keratynocytes where TMC6 and TMC8 stabilize CIB1 levels and reciprocally. Together with TMC6, also forms a complex with and activates zinc transporter ZNT1 at the ER membrane of keratynocytes, thereby facilitating zinc uptake into the ER. Also inhibits receptor-mediated calcium release from ER stores and calcium activated and volume regulated chloride channels. Down-regulates the activity of transcription factors induced by zinc and cytokines. Also sequesters TRADD which impairs the recruitment of TRAF2 and RIPK1 in the pro-survival complex I and promotes proapoptotic complex II formation, and may therefore be involved in TNF-induced cell death/survival decisions. The sequence is that of Transmembrane channel-like protein 8 from Homo sapiens (Human).